We begin with the raw amino-acid sequence, 423 residues long: vacuole-related protein 17 (423 aa).

Residue alanine 2 is modified to N-acetylalanine. A disordered region spans residues 109-134 (ATVPNEAPNDSPQSQSTRSSLGSFQP). The segment at 110-170 (TVPNEAPNDS…NPINEVDCPS (61 aa)) is MYO2-binding. The segment covering 116–131 (PNDSPQSQSTRSSLGS) has biased composition (polar residues). Residue serine 119 is modified to Phosphoserine. Threonine 149 carries the post-translational modification Phosphothreonine. Residues 150–211 (PSKPPKKSVG…SKKPSSSDTY (62 aa)) form a disordered region. Serine 178 is subject to Phosphoserine. The segment covering 182–192 (QPARNRTLRAA) has biased composition (basic residues). The span at 199–211 (LNKSKKPSSSDTY) shows a compositional bias: polar residues. The residue at position 248 (threonine 248) is a Phosphothreonine. Serine 269 bears the Phosphoserine mark. Residues 290–380 (SASFFRPSNP…ISESFQSKRG (91 aa)) are VAC8-binding.

It belongs to the VAC17 family. In terms of assembly, interacts with MYO2 and VAC8. Interacts with ATG18.

The protein resides in the vacuole membrane. Vacuole-specific MYO2 receptor required for vacuole inheritance. Binds simultaneously to MYO2 and to VAC8, a vacuolar membrane protein, forming a transport complex which moves the attached vacuole membrane along actin cables into the bud. Once the vacuole arrives in the bud, VAC17 is degraded, depositing the vacuole in its correct location. The chain is vacuole-related protein 17 (VAC17) from Saccharomyces cerevisiae (strain ATCC 204508 / S288c) (Baker's yeast).